We begin with the raw amino-acid sequence, 312 residues long: Acetylglutamate kinase (312 aa).

Substrate is bound by residues glycine 74 to glycine 75, arginine 96, and asparagine 195.

This sequence belongs to the acetylglutamate kinase family. ArgB subfamily.

The protein resides in the cytoplasm. It carries out the reaction N-acetyl-L-glutamate + ATP = N-acetyl-L-glutamyl 5-phosphate + ADP. Its pathway is amino-acid biosynthesis; L-arginine biosynthesis; N(2)-acetyl-L-ornithine from L-glutamate: step 2/4. Catalyzes the ATP-dependent phosphorylation of N-acetyl-L-glutamate. The sequence is that of Acetylglutamate kinase from Nocardioides sp. (strain ATCC BAA-499 / JS614).